The primary structure comprises 464 residues: NADH dehydrogenase [ubiquinone] flavoprotein 1, mitochondrial (464 aa).

The N-terminal 20 residues, methionine 1–phenylalanine 20, are a transit peptide targeting the mitochondrion. An N6-acetyllysine; alternate modification is found at lysine 81. Residue lysine 81 is modified to N6-succinyllysine; alternate. Position 87–96 (glycine 87–glycine 96) interacts with NADH. Position 104 is an N6-acetyllysine (lysine 104). Arginine 199–threonine 247 lines the FMN pocket. Arginine 257 carries the omega-N-methylarginine modification. Lysine 375 bears the N6-acetyllysine mark. Cysteine 379, cysteine 382, cysteine 385, and cysteine 425 together coordinate [4Fe-4S] cluster.

This sequence belongs to the complex I 51 kDa subunit family. As to quaternary structure, core subunit of respiratory chain NADH dehydrogenase (Complex I) which is composed of 45 different subunits. This is a component of the flavoprotein-sulfur (FP) fragment of the enzyme. Interacts with RAB5IF. FMN is required as a cofactor. The cofactor is [4Fe-4S] cluster.

Its subcellular location is the mitochondrion inner membrane. It carries out the reaction a ubiquinone + NADH + 5 H(+)(in) = a ubiquinol + NAD(+) + 4 H(+)(out). Its function is as follows. Core subunit of the mitochondrial membrane respiratory chain NADH dehydrogenase (Complex I) which catalyzes electron transfer from NADH through the respiratory chain, using ubiquinone as an electron acceptor. Part of the peripheral arm of the enzyme, where the electrons from NADH are accepted by flavin mononucleotide (FMN) and then passed along a chain of iron-sulfur clusters by electron tunnelling to the final acceptor ubiquinone. Contains FMN, which is the initial electron acceptor as well as one iron-sulfur cluster. In Pan troglodytes (Chimpanzee), this protein is NADH dehydrogenase [ubiquinone] flavoprotein 1, mitochondrial.